The chain runs to 78 residues: Protein SlyX homolog (78 aa).

This sequence belongs to the SlyX family.

The sequence is that of Protein SlyX homolog from Xylella fastidiosa (strain 9a5c).